The primary structure comprises 350 residues: Anthranilate phosphoribosyltransferase (350 aa).

5-phospho-alpha-D-ribose 1-diphosphate is bound by residues G93, 96-97, T101, 103-106, 121-129, and S133; these read GD, NIST, and KHGNRSASG. G93 lines the anthranilate pocket. S105 is a Mg(2+) binding site. N124 contributes to the anthranilate binding site. R179 provides a ligand contact to anthranilate. 2 residues coordinate Mg(2+): D238 and E239.

Belongs to the anthranilate phosphoribosyltransferase family. As to quaternary structure, homodimer. Mg(2+) is required as a cofactor.

The catalysed reaction is N-(5-phospho-beta-D-ribosyl)anthranilate + diphosphate = 5-phospho-alpha-D-ribose 1-diphosphate + anthranilate. It functions in the pathway amino-acid biosynthesis; L-tryptophan biosynthesis; L-tryptophan from chorismate: step 2/5. Its function is as follows. Catalyzes the transfer of the phosphoribosyl group of 5-phosphorylribose-1-pyrophosphate (PRPP) to anthranilate to yield N-(5'-phosphoribosyl)-anthranilate (PRA). The polypeptide is Anthranilate phosphoribosyltransferase (Parasynechococcus marenigrum (strain WH8102)).